The sequence spans 33 residues: Pardaxin P-1 (33 aa).

This sequence belongs to the pardaxin family. In terms of assembly, in aqueous solution exists as a tetramer.

Its subcellular location is the secreted. It is found in the target cell membrane. Functionally, exhibits unusual shark repellent and surfactant properties. Forms voltage-dependent, ion-permeable channels in membranes. At high concentration causes cell membrane lysis. Causes death in killfish oryzias latipes in 30 minutes at a concentration of 25 micrograms/ml. This is Pardaxin P-1 from Pardachirus pavoninus (Peacock sole).